The primary structure comprises 327 residues: Undecaprenyl-phosphate 4-deoxy-4-formamido-L-arabinose transferase (327 aa).

2 consecutive transmembrane segments (helical) span residues 235–255 and 270–290; these read LLSLVGSAIALLGFTFSVLLV and VFTLFAVLFMFIGAQFVGMGL.

Belongs to the glycosyltransferase 2 family.

The protein resides in the cell inner membrane. It carries out the reaction UDP-4-deoxy-4-formamido-beta-L-arabinose + di-trans,octa-cis-undecaprenyl phosphate = 4-deoxy-4-formamido-alpha-L-arabinopyranosyl di-trans,octa-cis-undecaprenyl phosphate + UDP. It functions in the pathway glycolipid biosynthesis; 4-amino-4-deoxy-alpha-L-arabinose undecaprenyl phosphate biosynthesis; 4-amino-4-deoxy-alpha-L-arabinose undecaprenyl phosphate from UDP-4-deoxy-4-formamido-beta-L-arabinose and undecaprenyl phosphate: step 1/2. The protein operates within bacterial outer membrane biogenesis; lipopolysaccharide biosynthesis. Catalyzes the transfer of 4-deoxy-4-formamido-L-arabinose from UDP to undecaprenyl phosphate. The modified arabinose is attached to lipid A and is required for resistance to polymyxin and cationic antimicrobial peptides. This Yersinia pseudotuberculosis serotype IB (strain PB1/+) protein is Undecaprenyl-phosphate 4-deoxy-4-formamido-L-arabinose transferase.